We begin with the raw amino-acid sequence, 127 residues long: PanD regulatory factor (127 aa).

Positions 1–127 (MKLTIIRLEK…TAQQGGWEKC (127 aa)) constitute an N-acetyltransferase domain. 2 interaction with PanD regions span residues 43-48 (RFNERL) and 66-76 (LRVREVTRRRG). CoA-binding positions include 66-68 (LRV) and 72-79 (TRRRGVGQ).

The protein belongs to the PanZ/PanM family. In terms of assembly, interacts with PanD in the presence of CoA. Forms a heterooctameric complex composed of four PanD subunits and four PanZ subunits. Monomer in solution.

With respect to regulation, activation of PanD processing occurs even at low CoA concentrations. In contrast, full inhibition of PanD catalytic activity only occurs at sufficiently high CoA concentrations. In terms of biological role, controls both the activation and catalytic activity of PanD in a coenzyme A (CoA)-dependent fashion. Binding of CoA or a derivative to PanZ leads to interaction with PanD, which promotes the processing and activation of pro-PanD, and subsequent substrate-mediated inhibition of the active form of PanD. Inhibition of PanD activity is probably the primary metabolic role of PanZ, allowing negative feedback regulation of pantothenate biosynthesis by CoA. In Escherichia coli (strain K12), this protein is PanD regulatory factor.